Here is a 430-residue protein sequence, read N- to C-terminus: Cytochrome c biogenesis protein CcsB (430 aa).

3 consecutive transmembrane segments (helical) span residues 14–34, 72–92, and 162–182; these read LRIAIGLLLVIALASALGTAI, SSWFLALLAWLGLALILCSWR, and AGPMLVHLGLVLLMLGAVWGS.

The protein belongs to the Ccs1/CcsB family. In terms of assembly, may interact with CcsA.

It localises to the cellular thylakoid membrane. Its function is as follows. Required during biogenesis of c-type cytochromes (cytochrome c6 and cytochrome f) at the step of heme attachment. The sequence is that of Cytochrome c biogenesis protein CcsB from Prochlorococcus marinus (strain MIT 9313).